Reading from the N-terminus, the 144-residue chain is Small ribosomal subunit protein uS11 (144 aa).

Positions 123–144 (EDVTPVPTDSTRRKGSRRGRRL) are disordered. Positions 135–144 (RKGSRRGRRL) are enriched in basic residues.

It belongs to the universal ribosomal protein uS11 family.

This Trypanosoma brucei brucei protein is Small ribosomal subunit protein uS11 (RPS14).